Consider the following 273-residue polypeptide: Formamidopyrimidine-DNA glycosylase (273 aa).

Pro-2 acts as the Schiff-base intermediate with DNA in catalysis. Glu-3 (proton donor) is an active-site residue. The Proton donor; for beta-elimination activity role is filled by Lys-57. His-91, Arg-110, and Lys-151 together coordinate DNA. Residues 236 to 270 (QVYGRKDEACNDCGTIIEAKVIGQRNSYFCPHCQM) form an FPG-type zinc finger. The active-site Proton donor; for delta-elimination activity is Arg-260.

It belongs to the FPG family. Monomer. Requires Zn(2+) as cofactor.

The enzyme catalyses Hydrolysis of DNA containing ring-opened 7-methylguanine residues, releasing 2,6-diamino-4-hydroxy-5-(N-methyl)formamidopyrimidine.. The catalysed reaction is 2'-deoxyribonucleotide-(2'-deoxyribose 5'-phosphate)-2'-deoxyribonucleotide-DNA = a 3'-end 2'-deoxyribonucleotide-(2,3-dehydro-2,3-deoxyribose 5'-phosphate)-DNA + a 5'-end 5'-phospho-2'-deoxyribonucleoside-DNA + H(+). Involved in base excision repair of DNA damaged by oxidation or by mutagenic agents. Acts as a DNA glycosylase that recognizes and removes damaged bases. Has a preference for oxidized purines, such as 7,8-dihydro-8-oxoguanine (8-oxoG). Has AP (apurinic/apyrimidinic) lyase activity and introduces nicks in the DNA strand. Cleaves the DNA backbone by beta-delta elimination to generate a single-strand break at the site of the removed base with both 3'- and 5'-phosphates. The chain is Formamidopyrimidine-DNA glycosylase from Actinobacillus pleuropneumoniae serotype 5b (strain L20).